A 97-amino-acid chain; its full sequence is Biogenesis of lysosome-related organelles complex 1 subunit SNN1 (97 aa).

Residues 45–97 (VVRLKQIRNLLKEEQEYYNEEEGLGVERERLEELELRVEKLTQKYKKLLADCV) are a coiled coil.

The protein belongs to the SNAPIN family. Component of the biogenesis of lysosome-related organelles complex-1 (BLOC-1).

It is found in the endosome. Its function is as follows. Component of the biogenesis of lysosome-related organelles complex-1 (BLOC-1), a complex involved in endosomal cargo sorting. This chain is Biogenesis of lysosome-related organelles complex 1 subunit SNN1 (SNN1), found in Lachancea thermotolerans (strain ATCC 56472 / CBS 6340 / NRRL Y-8284) (Yeast).